We begin with the raw amino-acid sequence, 304 residues long: Ribonuclease Z (304 aa).

H61, H63, D65, H66, H138, D206, and H265 together coordinate Zn(2+). The Proton acceptor role is filled by D65.

Belongs to the RNase Z family. Homodimer. Requires Zn(2+) as cofactor.

The catalysed reaction is Endonucleolytic cleavage of RNA, removing extra 3' nucleotides from tRNA precursor, generating 3' termini of tRNAs. A 3'-hydroxy group is left at the tRNA terminus and a 5'-phosphoryl group is left at the trailer molecule.. In terms of biological role, zinc phosphodiesterase, which displays some tRNA 3'-processing endonuclease activity. Probably involved in tRNA maturation, by removing a 3'-trailer from precursor tRNA. This is Ribonuclease Z from Lachnospira eligens (strain ATCC 27750 / DSM 3376 / VPI C15-48 / C15-B4) (Eubacterium eligens).